We begin with the raw amino-acid sequence, 142 residues long: Protein Turandot X (142 aa).

Residues Met1 to Ala22 form the signal peptide.

The protein belongs to the Turandot family.

Its subcellular location is the secreted. A humoral factor that may play a role in stress tolerance. The sequence is that of Protein Turandot X from Drosophila melanogaster (Fruit fly).